We begin with the raw amino-acid sequence, 312 residues long: Holliday junction branch migration complex subunit RuvB (312 aa).

A large ATPase domain (RuvB-L) region spans residues 1–168 (MKTNNEFRPQ…FGHVFYLSEY (168 aa)). ATP-binding positions include R8, G49, K52, T53, T54, 115–117 (EDF), R158, Y168, and R206. T53 is a Mg(2+) binding site. Residues 169–234 (ETSEIAAIIL…NIKNIFEKIQ (66 aa)) form a small ATPAse domain (RuvB-S) region. The interval 237–312 (DFGLEEQDIN…EFLKNNQLIK (76 aa)) is head domain (RuvB-H). DNA contacts are provided by K290 and R295.

The protein belongs to the RuvB family. As to quaternary structure, homohexamer. Forms an RuvA(8)-RuvB(12)-Holliday junction (HJ) complex. HJ DNA is sandwiched between 2 RuvA tetramers; dsDNA enters through RuvA and exits via RuvB. An RuvB hexamer assembles on each DNA strand where it exits the tetramer. Each RuvB hexamer is contacted by two RuvA subunits (via domain III) on 2 adjacent RuvB subunits; this complex drives branch migration. In the full resolvosome a probable DNA-RuvA(4)-RuvB(12)-RuvC(2) complex forms which resolves the HJ.

It localises to the cytoplasm. It carries out the reaction ATP + H2O = ADP + phosphate + H(+). Functionally, the RuvA-RuvB-RuvC complex processes Holliday junction (HJ) DNA during genetic recombination and DNA repair, while the RuvA-RuvB complex plays an important role in the rescue of blocked DNA replication forks via replication fork reversal (RFR). RuvA specifically binds to HJ cruciform DNA, conferring on it an open structure. The RuvB hexamer acts as an ATP-dependent pump, pulling dsDNA into and through the RuvAB complex. RuvB forms 2 homohexamers on either side of HJ DNA bound by 1 or 2 RuvA tetramers; 4 subunits per hexamer contact DNA at a time. Coordinated motions by a converter formed by DNA-disengaged RuvB subunits stimulates ATP hydrolysis and nucleotide exchange. Immobilization of the converter enables RuvB to convert the ATP-contained energy into a lever motion, pulling 2 nucleotides of DNA out of the RuvA tetramer per ATP hydrolyzed, thus driving DNA branch migration. The RuvB motors rotate together with the DNA substrate, which together with the progressing nucleotide cycle form the mechanistic basis for DNA recombination by continuous HJ branch migration. Branch migration allows RuvC to scan DNA until it finds its consensus sequence, where it cleaves and resolves cruciform DNA. The protein is Holliday junction branch migration complex subunit RuvB of Ureaplasma urealyticum serovar 10 (strain ATCC 33699 / Western).